We begin with the raw amino-acid sequence, 350 residues long: Heat-inducible transcription repressor HrcA (350 aa).

It belongs to the HrcA family.

Its function is as follows. Negative regulator of class I heat shock genes (grpE-dnaK-dnaJ and groELS operons). Prevents heat-shock induction of these operons. The protein is Heat-inducible transcription repressor HrcA of Xanthomonas euvesicatoria pv. vesicatoria (strain 85-10) (Xanthomonas campestris pv. vesicatoria).